We begin with the raw amino-acid sequence, 200 residues long: ATP-dependent Clp protease proteolytic subunit 1 (200 aa).

Ser98 serves as the catalytic Nucleophile. The active site involves His123.

The protein belongs to the peptidase S14 family. Fourteen ClpP subunits assemble into 2 heptameric rings which stack back to back to give a disk-like structure with a central cavity, resembling the structure of eukaryotic proteasomes.

The protein localises to the cytoplasm. It catalyses the reaction Hydrolysis of proteins to small peptides in the presence of ATP and magnesium. alpha-casein is the usual test substrate. In the absence of ATP, only oligopeptides shorter than five residues are hydrolyzed (such as succinyl-Leu-Tyr-|-NHMec, and Leu-Tyr-Leu-|-Tyr-Trp, in which cleavage of the -Tyr-|-Leu- and -Tyr-|-Trp bonds also occurs).. Functionally, cleaves peptides in various proteins in a process that requires ATP hydrolysis. Has a chymotrypsin-like activity. Plays a major role in the degradation of misfolded proteins. This chain is ATP-dependent Clp protease proteolytic subunit 1, found in Mycobacterium leprae (strain TN).